Reading from the N-terminus, the 69-residue chain is U2-agatoxin-Ao1w (69 aa).

Positions 1 to 20 (MRAIISLLLISAMVFSMIEA) are cleaved as a signal peptide. Residues 21 to 34 (VPVEEGLQLFEGER) constitute a propeptide that is removed on maturation. Disulfide bonds link cysteine 37–cysteine 53, cysteine 44–cysteine 58, and cysteine 52–cysteine 68.

Belongs to the neurotoxin 01 (U2-agtx) family. As to expression, expressed by the venom gland.

It is found in the secreted. Functionally, insect active toxin causing rapid but reversible paralysis in crickets. No activity shown in mammals. Does not show effect on mammalian voltage-gated calcium channels. This is U2-agatoxin-Ao1w from Agelena orientalis (Funnel-web spider).